The chain runs to 415 residues: Imidazolonepropionase (415 aa).

Positions 76 and 78 each coordinate Fe(3+). Zn(2+) is bound by residues histidine 76 and histidine 78. 4-imidazolone-5-propanoate-binding residues include arginine 85, tyrosine 148, and histidine 181. Tyrosine 148 contributes to the N-formimidoyl-L-glutamate binding site. Fe(3+) is bound at residue histidine 246. Histidine 246 contacts Zn(2+). Glutamate 249 contacts 4-imidazolone-5-propanoate. Residue aspartate 320 coordinates Fe(3+). Position 320 (aspartate 320) interacts with Zn(2+). Positions 322 and 324 each coordinate N-formimidoyl-L-glutamate. A 4-imidazolone-5-propanoate-binding site is contributed by threonine 325.

It belongs to the metallo-dependent hydrolases superfamily. HutI family. Requires Zn(2+) as cofactor. It depends on Fe(3+) as a cofactor.

It localises to the cytoplasm. The enzyme catalyses 4-imidazolone-5-propanoate + H2O = N-formimidoyl-L-glutamate. It participates in amino-acid degradation; L-histidine degradation into L-glutamate; N-formimidoyl-L-glutamate from L-histidine: step 3/3. Catalyzes the hydrolytic cleavage of the carbon-nitrogen bond in imidazolone-5-propanoate to yield N-formimidoyl-L-glutamate. It is the third step in the universal histidine degradation pathway. This Caldanaerobacter subterraneus subsp. tengcongensis (strain DSM 15242 / JCM 11007 / NBRC 100824 / MB4) (Thermoanaerobacter tengcongensis) protein is Imidazolonepropionase.